Here is an 87-residue protein sequence, read N- to C-terminus: Toxin Css39.8 (87 aa).

An N-terminal signal peptide occupies residues 1–19 (MNSLLMITACFFLIGTVWA). One can recognise an LCN-type CS-alpha/beta domain in the interval 20–85 (KEGYLVNKST…TYPLPNKSCS (66 aa)). Intrachain disulfides connect Cys-31–Cys-84, Cys-35–Cys-60, Cys-44–Cys-65, and Cys-48–Cys-67.

This sequence belongs to the long (4 C-C) scorpion toxin superfamily. Sodium channel inhibitor family. Beta subfamily. Expressed by the venom gland.

Its subcellular location is the secreted. Its function is as follows. Beta toxins bind voltage-independently at site-4 of sodium channels (Nav) and shift the voltage of activation toward more negative potentials thereby affecting sodium channel activation and promoting spontaneous and repetitive firing. This toxin is lethal to crustaceans (freshwater crayfish (Cambarellus montezumae spp.)), it provokes a reversible paralysis to insects (crickets (Achaeta spp.)), but is not toxic to mice. At high concentrations, it does displace the (beta) mammal-specific toxin Cn2 from rat brain synaptosomes. The protein is Toxin Css39.8 of Centruroides suffusus (Durango bark scorpion).